A 779-amino-acid polypeptide reads, in one-letter code: Mesenchyme-specific cell surface glycoprotein (779 aa).

Residues 1-15 (MQFGVPLLVLCLALG) form the signal peptide. Asparagine 203 and asparagine 234 each carry an N-linked (GlcNAc...) asparagine glycan. The tract at residues 249-363 (AGFPRGTTWS…QYPMIPTTPL (115 aa)) is disordered. A compositionally biased stretch (gly residues) spans 262–351 (GAGGQGGQGQ…GGQGGQGGGN (90 aa)). Asparagine 369, asparagine 451, and asparagine 609 each carry an N-linked (GlcNAc...) asparagine glycan.

Restricted to the primary mesenchyme cell lineage.

The protein resides in the cell membrane. Functionally, not known. Could be involved in mesenchyme cell migration, adhesion, fusion, or spicule formation. This Strongylocentrotus purpuratus (Purple sea urchin) protein is Mesenchyme-specific cell surface glycoprotein.